Reading from the N-terminus, the 306-residue chain is Agmatinase (306 aa).

Mn(2+)-binding residues include histidine 126, aspartate 149, histidine 151, aspartate 153, aspartate 230, and aspartate 232.

The protein belongs to the arginase family. Agmatinase subfamily. Requires Mn(2+) as cofactor.

The enzyme catalyses agmatine + H2O = urea + putrescine. The protein operates within amine and polyamine biosynthesis; putrescine biosynthesis via agmatine pathway; putrescine from agmatine: step 1/1. In terms of biological role, catalyzes the formation of putrescine from agmatine. This is Agmatinase from Serratia proteamaculans (strain 568).